Reading from the N-terminus, the 1595-residue chain is DNA-directed RNA polymerase subunit beta'' (1595 aa).

Positions 216, 286, 294, and 297 each coordinate Zn(2+).

Belongs to the RNA polymerase beta' chain family. RpoC2 subfamily. In plastids the minimal PEP RNA polymerase catalytic core is composed of four subunits: alpha, beta, beta', and beta''. When a (nuclear-encoded) sigma factor is associated with the core the holoenzyme is formed, which can initiate transcription. Zn(2+) serves as cofactor.

The protein resides in the plastid. It is found in the chloroplast. The enzyme catalyses RNA(n) + a ribonucleoside 5'-triphosphate = RNA(n+1) + diphosphate. Functionally, DNA-dependent RNA polymerase catalyzes the transcription of DNA into RNA using the four ribonucleoside triphosphates as substrates. This chain is DNA-directed RNA polymerase subunit beta'', found in Bigelowiella natans (Pedinomonas minutissima).